A 66-amino-acid chain; its full sequence is uncharacterized protein (66 aa).

Residues 32–49 (WAFSLLIAGSAFLWIYMR) form a helical membrane-spanning segment.

The protein localises to the membrane. This is an uncharacterized protein from Bacillus subtilis (strain 168).